A 357-amino-acid polypeptide reads, in one-letter code: Ribosomal RNA large subunit methyltransferase M (357 aa).

Residues Ser-183, Ala-216 to Gly-219, Asp-235, Asp-255, and Asp-271 contribute to the S-adenosyl-L-methionine site. Lys-300 (proton acceptor) is an active-site residue.

Belongs to the class I-like SAM-binding methyltransferase superfamily. RNA methyltransferase RlmE family. RlmM subfamily. In terms of assembly, monomer.

Its subcellular location is the cytoplasm. The enzyme catalyses cytidine(2498) in 23S rRNA + S-adenosyl-L-methionine = 2'-O-methylcytidine(2498) in 23S rRNA + S-adenosyl-L-homocysteine + H(+). Catalyzes the 2'-O-methylation at nucleotide C2498 in 23S rRNA. In Pseudomonas savastanoi pv. phaseolicola (strain 1448A / Race 6) (Pseudomonas syringae pv. phaseolicola (strain 1448A / Race 6)), this protein is Ribosomal RNA large subunit methyltransferase M.